The primary structure comprises 230 residues: Ribulose-phosphate 3-epimerase (230 aa).

Ser-10 is a substrate binding site. Positions 35, 37, and 68 each coordinate a divalent metal cation. The active-site Proton acceptor is Asp-37. Substrate contacts are provided by residues His-68, 146–149, 179–181, and 201–202; these read GFGG, DGG, and GS. Asp-179 is an a divalent metal cation binding site. The active-site Proton donor is Asp-179.

Belongs to the ribulose-phosphate 3-epimerase family. In terms of assembly, homohexamer. A divalent metal cation is required as a cofactor.

The enzyme catalyses D-ribulose 5-phosphate = D-xylulose 5-phosphate. It functions in the pathway carbohydrate degradation. Catalyzes the reversible epimerization of D-ribulose 5-phosphate to D-xylulose 5-phosphate. In Synechocystis sp. (strain ATCC 27184 / PCC 6803 / Kazusa), this protein is Ribulose-phosphate 3-epimerase.